The sequence spans 223 residues: ATP phosphoribosyltransferase (223 aa).

This sequence belongs to the ATP phosphoribosyltransferase family. Short subfamily. As to quaternary structure, heteromultimer composed of HisG and HisZ subunits.

The protein resides in the cytoplasm. The enzyme catalyses 1-(5-phospho-beta-D-ribosyl)-ATP + diphosphate = 5-phospho-alpha-D-ribose 1-diphosphate + ATP. The protein operates within amino-acid biosynthesis; L-histidine biosynthesis; L-histidine from 5-phospho-alpha-D-ribose 1-diphosphate: step 1/9. Its function is as follows. Catalyzes the condensation of ATP and 5-phosphoribose 1-diphosphate to form N'-(5'-phosphoribosyl)-ATP (PR-ATP). Has a crucial role in the pathway because the rate of histidine biosynthesis seems to be controlled primarily by regulation of HisG enzymatic activity. In Novosphingobium aromaticivorans (strain ATCC 700278 / DSM 12444 / CCUG 56034 / CIP 105152 / NBRC 16084 / F199), this protein is ATP phosphoribosyltransferase.